A 448-amino-acid chain; its full sequence is tRNA modification GTPase MnmE (448 aa).

Residues arginine 24, glutamate 81, and lysine 120 each contribute to the (6S)-5-formyl-5,6,7,8-tetrahydrofolate site. Residues glycine 216 to glycine 373 enclose the TrmE-type G domain. K(+) is bound at residue asparagine 226. GTP contacts are provided by residues asparagine 226–serine 231, threonine 245–threonine 251, and aspartate 270–glycine 273. Serine 230 lines the Mg(2+) pocket. Residues threonine 245, isoleucine 247, and threonine 250 each coordinate K(+). Threonine 251 serves as a coordination point for Mg(2+). Lysine 448 serves as a coordination point for (6S)-5-formyl-5,6,7,8-tetrahydrofolate.

It belongs to the TRAFAC class TrmE-Era-EngA-EngB-Septin-like GTPase superfamily. TrmE GTPase family. As to quaternary structure, homodimer. Heterotetramer of two MnmE and two MnmG subunits. K(+) serves as cofactor.

The protein resides in the cytoplasm. Its function is as follows. Exhibits a very high intrinsic GTPase hydrolysis rate. Involved in the addition of a carboxymethylaminomethyl (cmnm) group at the wobble position (U34) of certain tRNAs, forming tRNA-cmnm(5)s(2)U34. This chain is tRNA modification GTPase MnmE, found in Neisseria meningitidis serogroup A / serotype 4A (strain DSM 15465 / Z2491).